A 467-amino-acid chain; its full sequence is MKVKTRFAPSPTGNLHIGSIRTALYSWLFARHHNGKFVLRIEDTDLVRSELISIDSIFNGLKWLGLNWDEGPYFQTKRLDRYKEVINVMLEKEDAYICVCSCQELEEIRKKQIEKGNKPRYPGTCRNLNIKNISNQNHVIRFKNPLFGKVKFQDKIRGEIVFDNAELDDLVIQRSNGMPTYNFCVVVDDMDMKITHVIRGEDHISNTPRQINILNSLKVKIPVYAHLSMILDEKGNKISKRKNAINIIEYYENGFLPEALLNYIIRLGWSYGDKEIFNLSEMKELFNLKSITKSSSTVNFKKLLWMNKYYINNSPLDYVSDCLKNYMEKKNINVEKGPDLELLVKLFRSRHHTLKEITESCRYFYEEINFFNHTVIEKYFTRKNCFILQTCYKKIEKLSIWDNKNISKIINDVSELIKVTKKEISMILRISMTGDICSPSISTVILLIGKEKALLRINNVVNYIKNL.

Residues 9–19 (PSPTGNLHIGS) carry the 'HIGH' region motif. The short motif at 237–241 (KISKR) is the 'KMSKS' region element. Lysine 240 lines the ATP pocket.

This sequence belongs to the class-I aminoacyl-tRNA synthetase family. Glutamate--tRNA ligase type 1 subfamily. As to quaternary structure, monomer.

It localises to the cytoplasm. It carries out the reaction tRNA(Glu) + L-glutamate + ATP = L-glutamyl-tRNA(Glu) + AMP + diphosphate. Functionally, catalyzes the attachment of glutamate to tRNA(Glu) in a two-step reaction: glutamate is first activated by ATP to form Glu-AMP and then transferred to the acceptor end of tRNA(Glu). This chain is Glutamate--tRNA ligase, found in Buchnera aphidicola subsp. Acyrthosiphon pisum (strain APS) (Acyrthosiphon pisum symbiotic bacterium).